A 156-amino-acid chain; its full sequence is Small ribosomal subunit protein uS7 (156 aa).

This sequence belongs to the universal ribosomal protein uS7 family. Part of the 30S ribosomal subunit. Contacts proteins S9 and S11.

One of the primary rRNA binding proteins, it binds directly to 16S rRNA where it nucleates assembly of the head domain of the 30S subunit. Is located at the subunit interface close to the decoding center, probably blocks exit of the E-site tRNA. The polypeptide is Small ribosomal subunit protein uS7 (Colwellia psychrerythraea (strain 34H / ATCC BAA-681) (Vibrio psychroerythus)).